Reading from the N-terminus, the 247-residue chain is MARLEVDILTLFPRMCAGYLGESILGKAQEAGLLAATITDIRDHATGKHRVCDDAPYGGGAGMVMKPEPLVEAIEAARARLPGAWVVLTSPRGARLDQALARRFAEHGRLILACGRYEGVDERVMTAVDMQVSIGDFVLTGGELAALCVVDAAARLVPGVLGNAASADAESFAGAEGLLEYPQYTRPPEFRGMRVPEVLLSGDHRRIERWRRREALRATRERRPDLFTRVSLPESDLRLIDAGDDEL.

S-adenosyl-L-methionine is bound by residues glycine 115 and 134-139 (IGDFVL).

This sequence belongs to the RNA methyltransferase TrmD family. As to quaternary structure, homodimer.

It localises to the cytoplasm. It catalyses the reaction guanosine(37) in tRNA + S-adenosyl-L-methionine = N(1)-methylguanosine(37) in tRNA + S-adenosyl-L-homocysteine + H(+). Specifically methylates guanosine-37 in various tRNAs. The protein is tRNA (guanine-N(1)-)-methyltransferase of Anaeromyxobacter dehalogenans (strain 2CP-C).